A 309-amino-acid chain; its full sequence is 2-phospho-L-lactate transferase (309 aa).

Residues aspartate 50 and lysine 89 each coordinate 7,8-didemethyl-8-hydroxy-5-deazariboflavin.

This sequence belongs to the CofD family. In terms of assembly, homodimer. The cofactor is Mg(2+).

It catalyses the reaction (2S)-lactyl-2-diphospho-5'-guanosine + 7,8-didemethyl-8-hydroxy-5-deazariboflavin = oxidized coenzyme F420-0 + GMP + H(+). It functions in the pathway cofactor biosynthesis; coenzyme F420 biosynthesis. Its function is as follows. Catalyzes the transfer of the 2-phospholactate moiety from (2S)-lactyl-2-diphospho-5'-guanosine to 7,8-didemethyl-8-hydroxy-5-deazariboflavin (FO) with the formation of oxidized coenzyme F420-0 and GMP. This Methanococcus maripaludis (strain C5 / ATCC BAA-1333) protein is 2-phospho-L-lactate transferase.